The chain runs to 311 residues: Methionyl-tRNA formyltransferase (311 aa).

(6S)-5,6,7,8-tetrahydrofolate is bound at residue serine 110–proline 113.

Belongs to the Fmt family.

It catalyses the reaction L-methionyl-tRNA(fMet) + (6R)-10-formyltetrahydrofolate = N-formyl-L-methionyl-tRNA(fMet) + (6S)-5,6,7,8-tetrahydrofolate + H(+). Functionally, attaches a formyl group to the free amino group of methionyl-tRNA(fMet). The formyl group appears to play a dual role in the initiator identity of N-formylmethionyl-tRNA by promoting its recognition by IF2 and preventing the misappropriation of this tRNA by the elongation apparatus. This Sulfurihydrogenibium sp. (strain YO3AOP1) protein is Methionyl-tRNA formyltransferase.